The chain runs to 831 residues: Glycerol-3-phosphate acyltransferase (831 aa).

The short motif at 304–309 is the HXXXXD motif element; the sequence is CHRSHM. Residues 801 to 831 form a disordered region; the sequence is VSMPAETSNQPEAPETPETPETPEPEGKTES.

This sequence belongs to the GPAT/DAPAT family.

The protein resides in the cell inner membrane. The catalysed reaction is sn-glycerol 3-phosphate + an acyl-CoA = a 1-acyl-sn-glycero-3-phosphate + CoA. The protein operates within phospholipid metabolism; CDP-diacylglycerol biosynthesis; CDP-diacylglycerol from sn-glycerol 3-phosphate: step 1/3. The chain is Glycerol-3-phosphate acyltransferase from Yersinia pseudotuberculosis serotype IB (strain PB1/+).